Consider the following 525-residue polypeptide: 2,3-bisphosphoglycerate-independent phosphoglycerate mutase 2 (525 aa).

Positions 14 and 64 each coordinate Mn(2+). S64 (phosphoserine intermediate) is an active-site residue. Substrate contacts are provided by residues H125, 155 to 156 (RD), R187, R193, 274 to 277 (RADR), and K347. Residues D414, H418, D455, H456, and H474 each contribute to the Mn(2+) site.

Belongs to the BPG-independent phosphoglycerate mutase family. Mn(2+) serves as cofactor.

It catalyses the reaction (2R)-2-phosphoglycerate = (2R)-3-phosphoglycerate. Its pathway is carbohydrate degradation; glycolysis; pyruvate from D-glyceraldehyde 3-phosphate: step 3/5. In terms of biological role, catalyzes the interconversion of 2-phosphoglycerate and 3-phosphoglycerate. This Methanosarcina barkeri (strain Fusaro / DSM 804) protein is 2,3-bisphosphoglycerate-independent phosphoglycerate mutase 2.